A 473-amino-acid polypeptide reads, in one-letter code: Photosystem II CP43 reaction center protein (473 aa).

A propeptide spanning residues 1–14 (MKTLYSPRRFYPVE) is cleaved from the precursor. T15 is subject to N-acetylthreonine. T15 is modified (phosphothreonine). The next 5 membrane-spanning stretches (helical) occupy residues 69–93 (LFEV…PHLA), 134–155 (LIGP…KDRN), 178–200 (KALF…RKIT), 255–275 (KPFA…LSYS), and 291–312 (WFNN…ASQA). E367 is a binding site for [CaMn4O5] cluster. The chain crosses the membrane as a helical span at residues 447–471 (RARAAAAGFEKGIDRDLEPVLFMTP).

This sequence belongs to the PsbB/PsbC family. PsbC subfamily. As to quaternary structure, PSII is composed of 1 copy each of membrane proteins PsbA, PsbB, PsbC, PsbD, PsbE, PsbF, PsbH, PsbI, PsbJ, PsbK, PsbL, PsbM, PsbT, PsbX, PsbY, PsbZ, Psb30/Ycf12, at least 3 peripheral proteins of the oxygen-evolving complex and a large number of cofactors. It forms dimeric complexes. Binds multiple chlorophylls and provides some of the ligands for the Ca-4Mn-5O cluster of the oxygen-evolving complex. It may also provide a ligand for a Cl- that is required for oxygen evolution. PSII binds additional chlorophylls, carotenoids and specific lipids. serves as cofactor.

Its subcellular location is the plastid. The protein localises to the chloroplast thylakoid membrane. Its function is as follows. One of the components of the core complex of photosystem II (PSII). It binds chlorophyll and helps catalyze the primary light-induced photochemical processes of PSII. PSII is a light-driven water:plastoquinone oxidoreductase, using light energy to abstract electrons from H(2)O, generating O(2) and a proton gradient subsequently used for ATP formation. This chain is Photosystem II CP43 reaction center protein, found in Welwitschia mirabilis (Tree tumbo).